A 346-amino-acid chain; its full sequence is MERNLSTVKTLVQFITESQKHVFGASGDLSKILNDIAVAAKIINREVNKAGLLDILGMEGGMNVQNEEVKKLDVYANDQFISALRSGGQCCAIASEENTDIIPIENNGHSKSNYVVLIDPLDGSSNIDVNVAIGSIFSIYRRVSESGPGETVDCMQVGNKQVAAGYIIYGSSTMMVYTTGDGVNGFTLDPSIGEFCLSHPNLKIPEDGFIYSVNEGNYADFPREIQEYIYYCKTPDFETSRPYSSRYIGSMVADFHRNLIKGGIFMYPATAKYPLGKLRLMYECNPLAFIVEQAGGKAIDGEGRILDIEPTNIHQRTGIIIGSKNMVEKVEAFIQMNVGLNVYRLK.

Mg(2+) contacts are provided by glutamate 96, aspartate 119, leucine 121, and aspartate 122. Substrate is bound by residues 122–125 (DGSS), asparagine 214, tyrosine 247, and lysine 277. Position 283 (glutamate 283) interacts with Mg(2+).

It belongs to the FBPase class 1 family. As to quaternary structure, homotetramer. Requires Mg(2+) as cofactor.

It is found in the cytoplasm. It carries out the reaction beta-D-fructose 1,6-bisphosphate + H2O = beta-D-fructose 6-phosphate + phosphate. It participates in carbohydrate biosynthesis; gluconeogenesis. The sequence is that of Fructose-1,6-bisphosphatase class 1 from Cytophaga hutchinsonii (strain ATCC 33406 / DSM 1761 / CIP 103989 / NBRC 15051 / NCIMB 9469 / D465).